Reading from the N-terminus, the 119-residue chain is Protein TusC (119 aa).

Belongs to the DsrF/TusC family. In terms of assembly, heterohexamer, formed by a dimer of trimers. The hexameric TusBCD complex contains 2 copies each of TusB, TusC and TusD. The TusBCD complex interacts with TusE.

It localises to the cytoplasm. Its function is as follows. Part of a sulfur-relay system required for 2-thiolation of 5-methylaminomethyl-2-thiouridine (mnm(5)s(2)U) at tRNA wobble positions. The sequence is that of Protein TusC from Pectobacterium atrosepticum (strain SCRI 1043 / ATCC BAA-672) (Erwinia carotovora subsp. atroseptica).